A 655-amino-acid polypeptide reads, in one-letter code: Endoplasmic reticulum chaperone BiP (655 aa).

Positions 1-19 (MMKFTVVAAALLLLGAVRA) are cleaved as a signal peptide. The segment at 1 to 81 (MMKFTVVAAA…EGERLIGDAA (81 aa)) is required for interaction with ELAPOR1. 37–40 (GTTY) contacts ATP. S87 carries the post-translational modification Phosphoserine. K97 is a binding site for ATP. K126 carries the N6-acetyllysine modification. The segment at 126 to 281 (KPYIQVDIGG…KKKTGKDVRK (156 aa)) is nucleotide-binding (NBD). Y161 is modified (3'-nitrotyrosine). K214 bears the N6-acetyllysine mark. ATP is bound at residue 228-230 (GGT). Residue K272 is modified to N6-acetyllysine. 294–301 (EKAKRALS) contributes to the ATP binding site. K327 is subject to N6-acetyllysine. K353 participates in a covalent cross-link: Glycyl lysine isopeptide (Lys-Gly) (interchain with G-Cter in SUMO2). K354 bears the N6-acetyllysine; alternate mark. A Glycyl lysine isopeptide (Lys-Gly) (interchain with G-Cter in SUMO1); alternate cross-link involves residue K354. 365 to 368 (GSTR) is a binding site for ATP. Residues 410-420 (QDTGDLVLLDV) are interdomain linker. Residues 421–501 (CPLTLGIETV…PRGVPQIEVT (81 aa)) form a substrate-binding (SBD) region. At K448 the chain carries N6-succinyllysine. Residue R493 is modified to Omega-N-methylarginine. T519 is subject to O-AMP-threonine; alternate. T519 is subject to Phosphothreonine; alternate. K586 carries the N6,N6,N6-trimethyllysine; by METTL21A; in vitro modification. The residue at position 586 (K586) is an N6,N6-dimethyllysine; alternate. At K586 the chain carries N6-methyllysine; alternate. K592 carries the post-translational modification N6-methyllysine. Residues 632 to 655 (ISKLYGSGGPPPTGEEDTSEKDEL) are disordered. T644 and T649 each carry phosphothreonine. Over residues 645 to 655 (GEEDTSEKDEL) the composition is skewed to acidic residues. The residue at position 650 (S650) is a Phosphoserine. The short motif at 652–655 (KDEL) is the Prevents secretion from ER element.

The protein belongs to the heat shock protein 70 family. As to quaternary structure, monomer and homooligomer; homooligomerization via the interdomain linker inactivates the chaperone activity and acts as a storage of HSPA5/BiP molecules. Interacts with DNAJC1 (via J domain). Component of an EIF2 complex at least composed of CELF1/CUGBP1, CALR, CALR3, EIF2S1, EIF2S2, HSP90B1 and HSPA5. Part of a large chaperone multiprotein complex comprising DNAJB11, HSP90B1, HSPA5, HYOU, PDIA2, PDIA4, PDIA6, PPIB, SDF2L1, UGGT1 and very small amounts of ERP29, but not, or at very low levels, CALR nor CANX. Interacts with TMEM132A and TRIM21. May form a complex with ERLEC1, OS9, SEL1L and SYVN1. Interacts with DNAJC10. Interacts with DNAJB9/ERdj4; leading to recruit HSPA5/BiP to ERN1/IRE1. Interacts with ERN1/IRE1 (via luminal domain); the interaction takes place following interaction with DNAJB9/ERdj4 and leads to inactivate ERN1/IRE1, the interaction also competitively inhibits ERN1 interaction with MANF. Interacts directly with MANF (via SAP domain); the interaction inhibits ATP binding to HSPA5/BiP and subsequent nucleotide exchange. Interacts with ERN1 (via luminal domain); the interaction competitively inhibits ERN1 interaction with MANF. Interacts with EIF2AK3/PERK (via luminal domain); interaction leads to inactivate EIF2AK3/PERK. Interacts with MX1. Interacts with METTL23. Interacts with CEMIP; the interaction induces calcium leakage from the endoplasmic reticulum and cell migration. Interacts with PCSK4 form; the interaction takes place in the endoplasmic reticulum. Interacts with CIPC. Interacts with CCDC88B (via C-terminus); the interaction opposes ERN1-mediated JNK activation, protecting against apoptosis. Interacts with INPP5K; necessary for INPP5K localization at the endoplasmic reticulum. Interacts with MANF; the interaction is direct. Interacts with LOXL2; leading to activate the ERN1/IRE1-XBP1 pathway of the unfolded protein response. Interacts with CLU under stressed condition; interaction increases CLU protein stability; facilitates its retrotranslocation and redistribution to the mitochondria; cooperatively suppress stress-induced apoptosis by stabilizing mitochondrial membrane integrity. Interacts with CCDC47. Interacts with CLN3. Interacts with ELAPOR1; may regulate the function of HSPA5 in apoptosis and cell proliferation. Interacts with CASP7. Interacts with ILDR2; the interaction stabilizes ILDR2 expression. Interacts with ADAM7. In unstressed cells, AMPylation at Thr-519 by FICD inactivates the chaperome activity: AMPylated form is locked in a relatively inert state and only weakly stimulated by J domain-containing proteins. In response to endoplasmic reticulum stress, de-AMPylation by the same protein, FICD, restores the chaperone activity. As to expression, expressed in sperm (at protein level).

The protein localises to the endoplasmic reticulum lumen. It localises to the melanosome. Its subcellular location is the cytoplasm. The protein resides in the cell surface. The enzyme catalyses ATP + H2O = ADP + phosphate + H(+). Its activity is regulated as follows. The chaperone activity is regulated by ATP-induced allosteric coupling of the nucleotide-binding (NBD) and substrate-binding (SBD) domains. In the ADP-bound and nucleotide-free (apo) states, the two domains have little interaction. In contrast, in the ATP-bound state the two domains are tightly coupled, which results in drastically accelerated kinetics in both binding and release of polypeptide substrates. J domain-containing co-chaperones (DNAJB9/ERdj4 or DNAJC10/ERdj5) stimulate the ATPase activity and are required for efficient substrate recognition by HSPA5/BiP. Homooligomerization inactivates participating HSPA5/BiP protomers and probably act as reservoirs to store HSPA5/BiP molecules when they are not needed by the cell. Functionally, endoplasmic reticulum chaperone that plays a key role in protein folding and quality control in the endoplasmic reticulum lumen. Involved in the correct folding of proteins and degradation of misfolded proteins via its interaction with DNAJC10/ERdj5, probably to facilitate the release of DNAJC10/ERdj5 from its substrate. Acts as a key repressor of the EIF2AK3/PERK and ERN1/IRE1-mediated unfolded protein response (UPR). In the unstressed endoplasmic reticulum, recruited by DNAJB9/ERdj4 to the luminal region of ERN1/IRE1, leading to disrupt the dimerization of ERN1/IRE1, thereby inactivating ERN1/IRE1. Also binds and inactivates EIF2AK3/PERK in unstressed cells. Accumulation of misfolded protein in the endoplasmic reticulum causes release of HSPA5/BiP from ERN1/IRE1 and EIF2AK3/PERK, allowing their homodimerization and subsequent activation. Plays an auxiliary role in post-translational transport of small presecretory proteins across endoplasmic reticulum (ER). May function as an allosteric modulator for SEC61 channel-forming translocon complex, likely cooperating with SEC62 to enable the productive insertion of these precursors into SEC61 channel. Appears to specifically regulate translocation of precursors having inhibitory residues in their mature region that weaken channel gating. May also play a role in apoptosis and cell proliferation. This chain is Endoplasmic reticulum chaperone BiP, found in Mus musculus (Mouse).